Consider the following 366-residue polypeptide: Probable cyclin-dependent kinase 10 (366 aa).

The 287-residue stretch at 7-293 (FEKLDSIGEG…ASDAIKHPFF (287 aa)) folds into the Protein kinase domain. Residues 13 to 21 (IGEGTYGIV) and Lys-36 each bind ATP. Residue Asp-132 is the Proton acceptor of the active site. A compositionally biased stretch (low complexity) spans 315–358 (FKNQNKKQNNNFNNFVQNNQTNQNNQTNQNNQTNQNNKTSQNNN). The interval 315–366 (FKNQNKKQNNNFNNFVQNNQTNQNNQTNQNNQTNQNNKTSQNNNMDSYKYSK) is disordered.

It belongs to the protein kinase superfamily. CMGC Ser/Thr protein kinase family. CDC2/CDKX subfamily.

It carries out the reaction L-seryl-[protein] + ATP = O-phospho-L-seryl-[protein] + ADP + H(+). The enzyme catalyses L-threonyl-[protein] + ATP = O-phospho-L-threonyl-[protein] + ADP + H(+). This is Probable cyclin-dependent kinase 10 (cdk10) from Dictyostelium discoideum (Social amoeba).